An 86-amino-acid polypeptide reads, in one-letter code: Co-chaperonin GroES (86 aa).

This sequence belongs to the GroES chaperonin family. In terms of assembly, heptamer of 7 subunits arranged in a ring. Interacts with the chaperonin GroEL.

Its subcellular location is the cytoplasm. Functionally, together with the chaperonin GroEL, plays an essential role in assisting protein folding. The GroEL-GroES system forms a nano-cage that allows encapsulation of the non-native substrate proteins and provides a physical environment optimized to promote and accelerate protein folding. GroES binds to the apical surface of the GroEL ring, thereby capping the opening of the GroEL channel. The chain is Co-chaperonin GroES from Campylobacter lari (strain RM2100 / D67 / ATCC BAA-1060).